The sequence spans 538 residues: ATP synthase subunit alpha, mitochondrial (538 aa).

Residue 197 to 204 (GDRQTGKT) participates in ATP binding. Residues 228 to 248 (FCIYVAVGQKRSTVAQIVKRL) form an essential and sufficient for enterobactin binding region.

It belongs to the ATPase alpha/beta chains family. As to quaternary structure, subunit of the F-type ATPase which has 2 components, CF(1) - the catalytic core - and CF(0) - the membrane proton channel. Ubiquitous (at protein level).

It is found in the mitochondrion. The protein resides in the mitochondrion inner membrane. In terms of biological role, mitochondrial membrane ATP synthase (F(1)F(0) ATP synthase or Complex V) produces ATP from ADP in the presence of a proton gradient across the membrane which is generated by electron transport complexes of the respiratory chain. F-type ATPases consist of two structural domains, F(1) - containing the extramembraneous catalytic core, and F(0) - containing the membrane proton channel, linked together by a central stalk and a peripheral stalk. During catalysis, ATP synthesis in the catalytic domain of F(1) is coupled via a rotary mechanism of the central stalk subunits to proton translocation. Subunits alpha and beta form the catalytic core in F(1). Rotation of the central stalk against the surrounding subunits leads to hydrolysis of ATP in three separate catalytic sites on the beta subunits. Subunit alpha does not bear the catalytic high-affinity ATP-binding sites. Binds the bacterial siderophore enterobactin and is required for the assimilation of enterobactin-bound iron from non-pathogenic bacteria. Promotes mitochondrial accumulation of enterobactin-derived iron ions. The protein is ATP synthase subunit alpha, mitochondrial of Caenorhabditis elegans.